Here is a 474-residue protein sequence, read N- to C-terminus: Probable periplasmic serine endoprotease DegP-like (474 aa).

Residues 1-25 (MRNLKSVTPLLMAALLWGQSLLAQA) form the signal peptide. Active-site charge relay system residues include H113, D143, and S216. Substrate-binding positions include 214-216 (GNS) and 271-275 (LGVVI). 2 PDZ domains span residues 260–351 (LKAD…VRDG) and 357–463 (KVTI…LRQG).

It belongs to the peptidase S1C family.

The protein localises to the periplasm. The enzyme catalyses Acts on substrates that are at least partially unfolded. The cleavage site P1 residue is normally between a pair of hydrophobic residues, such as Val-|-Val.. Functionally, might be efficient in the degradation of transiently denatured and unfolded proteins which accumulate in the periplasm following stress conditions. In Ectopseudomonas mendocina (strain ymp) (Pseudomonas mendocina), this protein is Probable periplasmic serine endoprotease DegP-like.